A 420-amino-acid polypeptide reads, in one-letter code: uncharacterized protein (420 aa).

The VWFA domain occupies 43-215; that stretch reads NLCLVLDHSG…HTFRQLFQRM (173 aa). The tract at residues 389–420 is disordered; that stretch reads LQSGEDLSEGDRKKTRMVSKTTLQPPSAPSEH.

This is an uncharacterized protein from Synechocystis sp. (strain ATCC 27184 / PCC 6803 / Kazusa).